We begin with the raw amino-acid sequence, 456 residues long: Glycerol-3-phosphate acyltransferase 4 (456 aa).

The signal sequence occupies residues 1–37; sequence MFLLLPFDSLIVNLLGISLTVLFTLLLVFIIVPAIFG. 2 consecutive transmembrane segments (helical) span residues 156 to 176 and 180 to 200; these read ISLRLTILWGLGVLIRYCFLL and IALAFTGIGLLVVGTTMVGYL. Asn-247 is a glycosylation site (N-linked (GlcNAc...) asparagine). The short motif at 248 to 253 is the HXXXXD motif element; sequence HTSPID. 3 N-linked (GlcNAc...) asparagine glycosylation sites follow: Asn-327, Asn-328, and Asn-362.

The protein belongs to the 1-acyl-sn-glycerol-3-phosphate acyltransferase family. Highly expressed in testis.

Its subcellular location is the endoplasmic reticulum membrane. It catalyses the reaction sn-glycerol 3-phosphate + an acyl-CoA = a 1-acyl-sn-glycero-3-phosphate + CoA. The catalysed reaction is dodecanoyl-CoA + sn-glycerol 3-phosphate = 1-dodecanoyl-sn-glycerol 3-phosphate + CoA. The enzyme catalyses sn-glycerol 3-phosphate + hexadecanoyl-CoA = 1-hexadecanoyl-sn-glycero-3-phosphate + CoA. It carries out the reaction sn-glycerol 3-phosphate + octadecanoyl-CoA = 1-octadecanoyl-sn-glycero-3-phosphate + CoA. It catalyses the reaction sn-glycerol 3-phosphate + (9Z)-octadecenoyl-CoA = 1-(9Z-octadecenoyl)-sn-glycero-3-phosphate + CoA. The catalysed reaction is (9Z,12Z)-octadecadienoyl-CoA + sn-glycerol 3-phosphate = 1-(9Z,12Z)-octadecadienoyl-sn-glycero-3-phosphate + CoA. Its pathway is phospholipid metabolism; CDP-diacylglycerol biosynthesis; CDP-diacylglycerol from sn-glycerol 3-phosphate: step 1/3. In terms of biological role, converts glycerol-3-phosphate to 1-acyl-sn-glycerol-3-phosphate (lysophosphatidic acid or LPA) by incorporating an acyl moiety at the sn-1 position of the glycerol backbone. Active against both saturated and unsaturated long-chain fatty acyl-CoAs. Protects cells against lipotoxicity. The polypeptide is Glycerol-3-phosphate acyltransferase 4 (Mus musculus (Mouse)).